Reading from the N-terminus, the 338-residue chain is Popeye domain-containing protein 1 (338 aa).

The Extracellular portion of the chain corresponds to 1–40 (MATESILITTLPMDLNSQINNVTFGLNENETLCENWREIH). N-linked (GlcNAc...) asparagine glycosylation is found at Asn-21 and Asn-29. A helical transmembrane segment spans residues 41-61 (HLVFHLANTCFAAGLVIPSTL). At 62–65 (NLHM) the chain is on the cytoplasmic side. The helical transmembrane segment at 66–86 (ILLRGMLCLGCIFFIIWAILF) threads the bilayer. Over 87–91 (RCALD) the chain is Extracellular. A helical membrane pass occupies residues 92–112 (IMIWNATFLSMNFMHFIYLVY). The Cytoplasmic portion of the chain corresponds to 113-338 (KKRPIKIEKD…VGPLSHAVFC (226 aa)).

It belongs to the popeye family.

Its subcellular location is the lateral cell membrane. The protein resides in the cell junction. It localises to the tight junction. The protein localises to the membrane. It is found in the cell membrane. Its subcellular location is the sarcolemma. The protein resides in the caveola. Cell adhesion molecule involved in the establishment and/or maintenance of cell integrity. May play a role in vamp3-mediated vesicular transport and recycling of different receptor molecules. May be involved in the formation and regulation of the tight junction (TJ) paracellular permeability barrier in epithelial cells. May induce primordial adhesive contact and aggregation of epithelial cells in a Ca(2+)-independent manner. May be involved in epithelial movement during corneal sheet formation and regeneration. May play a role in the regulation of cell shape and movement by modulating the Rho-GTPase activity. May be involved in skeletal muscle and heart development as well as in the maintenance of heart function. May also be involved in striated muscle regeneration and in the regulation of cell spreading. The sequence is that of Popeye domain-containing protein 1 (popdc1) from Xenopus tropicalis (Western clawed frog).